A 385-amino-acid chain; its full sequence is A-type ATP synthase subunit C (385 aa).

The protein belongs to the V-ATPase V0D/AC39 subunit family. In terms of assembly, has multiple subunits with at least A(3), B(3), C, D, E, F, H, I and proteolipid K(x).

It is found in the cell membrane. Functionally, component of the A-type ATP synthase that produces ATP from ADP in the presence of a proton gradient across the membrane. The sequence is that of A-type ATP synthase subunit C from Methanosphaera stadtmanae (strain ATCC 43021 / DSM 3091 / JCM 11832 / MCB-3).